Reading from the N-terminus, the 316-residue chain is Apolipoprotein E (316 aa).

The signal sequence occupies residues 1 to 18 (MKVLWVALVITLLAGCQA). Repeat copies occupy residues 79–100 (VLMD…GQLA), 101–122 (PIAQ…ARLA), 123–144 (SDME…AMMG), 145–166 (QTTD…KRLL), 167–188 (RDAE…EGSE), 189–210 (RSVS…ARAA), 211–232 (TVGT…QKLR), and 233–254 (GRVE…EQLE). Residues 79-254 (VLMDETMKEV…HLEEMREQLE (176 aa)) form an 8 X 22 AA approximate tandem repeats region. A Methionine sulfoxide modification is found at M142. The segment at 157-167 (HLRKLRKRLLR) is LDL and other lipoprotein receptors binding. 161–164 (LRKR) contributes to the heparin binding site. Residues 209–289 (AATVGTLASQ…SWFEPLVEDM (81 aa)) form a lipid-binding and lipoprotein association region. Heparin is bound at residue 228–235 (HQKLRGRV). A homooligomerization region spans residues 265-316 (SQMRLQAEAFQARLKSWFEPLVEDMQRQWAGLVEKVQLAMATSSTSAPSENH). The segment at 277–289 (RLKSWFEPLVEDM) is specificity for association with VLDL.

Belongs to the apolipoprotein A1/A4/E family. As to quaternary structure, homotetramer. May interact with ABCA1; functionally associated with ABCA1 in the biogenesis of HDLs. May interact with APP/A4 amyloid-beta peptide; the interaction is extremely stable in vitro but its physiological significance is unclear. May interact with MAPT. May interact with MAP2. In the cerebrospinal fluid, interacts with secreted SORL1. Interacts with PMEL; this allows the loading of PMEL luminal fragment on ILVs to induce fibril nucleation. APOE exists as multiple glycosylated and sialylated glycoforms within cells and in plasma. The extent of glycosylation and sialylation are tissue and context specific. In terms of processing, glycated in plasma VLDL. Post-translationally, phosphorylated by FAM20C in the extracellular medium.

It is found in the secreted. The protein localises to the extracellular space. The protein resides in the extracellular matrix. Its subcellular location is the extracellular vesicle. It localises to the endosome. It is found in the multivesicular body. APOE is an apolipoprotein, a protein associating with lipid particles, that mainly functions in lipoprotein-mediated lipid transport between organs via the plasma and interstitial fluids. APOE is a core component of plasma lipoproteins and is involved in their production, conversion and clearance. Apolipoproteins are amphipathic molecules that interact both with lipids of the lipoprotein particle core and the aqueous environment of the plasma. As such, APOE associates with chylomicrons, chylomicron remnants, very low density lipoproteins (VLDL) and intermediate density lipoproteins (IDL) but shows a preferential binding to high-density lipoproteins (HDL). It also binds a wide range of cellular receptors including the LDL receptor/LDLR and the very low-density lipoprotein receptor/VLDLR that mediate the cellular uptake of the APOE-containing lipoprotein particles. Finally, APOE also has a heparin-binding activity and binds heparan-sulfate proteoglycans on the surface of cells, a property that supports the capture and the receptor-mediated uptake of APOE-containing lipoproteins by cells. The chain is Apolipoprotein E (APOE) from Lipotes vexillifer (Yangtze river dolphin).